The following is a 64-amino-acid chain: Large ribosomal subunit protein bL35 (64 aa).

The span at 1–15 (MPKNKTHSGASKRFR) shows a compositional bias: basic residues. The segment at 1 to 20 (MPKNKTHSGASKRFRVTGSG) is disordered.

The protein belongs to the bacterial ribosomal protein bL35 family.

The chain is Large ribosomal subunit protein bL35 from Nocardioides sp. (strain ATCC BAA-499 / JS614).